A 428-amino-acid polypeptide reads, in one-letter code: NADP-specific glutamate dehydrogenase (428 aa).

Positions 68 and 92 each coordinate substrate. Lys104 functions as the Proton donor in the catalytic mechanism. Thr188 and Asn219 together coordinate NADP(+). Ser356 contacts substrate.

Belongs to the Glu/Leu/Phe/Val dehydrogenases family. Homohexamer.

It catalyses the reaction L-glutamate + NADP(+) + H2O = 2-oxoglutarate + NH4(+) + NADPH + H(+). Functionally, catalyzes the reversible oxidative deamination of glutamate to alpha-ketoglutarate and ammonia. This chain is NADP-specific glutamate dehydrogenase (gdhA), found in Synechocystis sp. (strain ATCC 27184 / PCC 6803 / Kazusa).